The chain runs to 164 residues: R-phycoerythrin alpha chain (164 aa).

2 residues coordinate (2R,3E)-phycoerythrobilin: Cys-82 and Cys-139.

Belongs to the phycobiliprotein family. Heterodimer of an alpha and a beta chain. In terms of processing, contains two covalently linked bilin chromophores.

Its subcellular location is the plastid. The protein localises to the chloroplast thylakoid membrane. Its function is as follows. Light-harvesting photosynthetic bile pigment-protein from the phycobiliprotein complex. This chain is R-phycoerythrin alpha chain (cpeA), found in Pyropia tenera (Nori).